A 198-amino-acid polypeptide reads, in one-letter code: Nicotinamidase 3 (198 aa).

It belongs to the isochorismatase family.

It catalyses the reaction nicotinamide + H2O = nicotinate + NH4(+). It functions in the pathway cofactor biosynthesis; nicotinate biosynthesis; nicotinate from nicotinamide: step 1/1. In terms of biological role, catalyzes the deamidation of nicotinamide, an early step in the NAD(+) salvage pathway. Prevents the accumulation of intracellular nicotinamide, a known inhibitor of poly(ADP-ribose) polymerases (PARP enzymes). In Arabidopsis thaliana (Mouse-ear cress), this protein is Nicotinamidase 3.